The chain runs to 254 residues: MEWEAPALVLSASPYGESSAIVHLLTEDLGLVHGLARGGTARANRALWQPGNLIRASWRGRLPDQLGNLSGELVHGSAARLMSAPLALAMLASACAVADGTLPEREPHPRIFHLLTRFFSLLSLDPDMAGWGGMAALLRWEACLLGDLGYGMDLSACAVTGGSAELAWVSPRTGRAVSDAAAGEWRPRLLRLPPLFLDESDPGTVQDWRDGLRLTGHFLARDAFGQRHRPLPPARLRLVDMIDALQPGALHPDD.

The protein belongs to the RecO family.

Its function is as follows. Involved in DNA repair and RecF pathway recombination. The protein is DNA repair protein RecO of Gluconacetobacter diazotrophicus (strain ATCC 49037 / DSM 5601 / CCUG 37298 / CIP 103539 / LMG 7603 / PAl5).